The primary structure comprises 147 residues: MGHFTEEDKATITSLWGKVNVEDAGGETLGRLLVVYPWTQRFFDSFGNLSSASAIMGNPKVKAHGKKVLTSLGDAIKNLDDLKGTFAQLSELHCDKLHVDPENFRLLGNVLVTVLAIHFGKEFTPEVQASWQKMVTGVASALSSRYH.

Position 2 is an N-acetylglycine (glycine 2). The region spanning 3–147 (HFTEEDKATI…VASALSSRYH (145 aa)) is the Globin domain. Threonine 13 carries the post-translational modification Phosphothreonine. Serine 45, serine 51, and serine 53 each carry phosphoserine. At lysine 60 the chain carries N6-acetyllysine. Histidine 64 provides a ligand contact to heme b. An N6-acetyllysine modification is found at lysine 83. Position 93 (histidine 93) interacts with heme b. The residue at position 94 (cysteine 94) is an S-nitrosocysteine. A Phosphoserine modification is found at serine 140.

The protein belongs to the globin family. As to quaternary structure, heterotetramer of two alpha chains and two gamma chains in fetal hemoglobin (Hb F). In terms of tissue distribution, red blood cells.

In terms of biological role, gamma chains make up the fetal hemoglobin F, in combination with alpha chains. The polypeptide is Hemoglobin subunit gamma-1 (HBG1) (Pongo pygmaeus (Bornean orangutan)).